A 177-amino-acid polypeptide reads, in one-letter code: Early nodulin-like protein 15 (177 aa).

The N-terminal stretch at 1-24 (MASSSLLVTIFLCISVFFFSSVNA) is a signal peptide. The region spanning 25-129 (NEVTVGGKSG…GQKLRLVVIT (105 aa)) is the Phytocyanin domain. The cysteines at positions 83 and 117 are disulfide-linked. N-linked (GlcNAc...) asparagine glycosylation is present at N84. Residue S153 is the site of GPI-anchor amidated serine attachment. A propeptide spans 154-177 (GAAKLAGGFSVVFGLVLGLWAFFF) (removed in mature form).

It belongs to the early nodulin-like (ENODL) family. In terms of tissue distribution, mostly expressed in seedlings, siliques and flowers, and, to a lower extent, in roots, stems and seeds, but barely in leaves.

Its subcellular location is the cell membrane. Its function is as follows. May act as a carbohydrate transporter. Required, together with ENODL11, ENODL12, ENODL13, ENODL14 and ENODL15, for male-female communication and pollen tube reception and burst at the synergid cell surface of the female gametophyte. In Arabidopsis thaliana (Mouse-ear cress), this protein is Early nodulin-like protein 15.